The sequence spans 128 residues: Small ribosomal subunit protein eS8 (128 aa).

The interval 1-41 (MSYYQGNDSRKITGGQKGKNRDKRKYELGSPPTETKISDKD) is disordered.

It belongs to the eukaryotic ribosomal protein eS8 family. As to quaternary structure, part of the 30S ribosomal subunit.

The sequence is that of Small ribosomal subunit protein eS8 from Sulfolobus acidocaldarius (strain ATCC 33909 / DSM 639 / JCM 8929 / NBRC 15157 / NCIMB 11770).